A 191-amino-acid polypeptide reads, in one-letter code: Guanylate kinase (191 aa).

The Guanylate kinase-like domain occupies 6 to 184 (GLIIILSSPS…TIQQIHTIIL (179 aa)). 13-20 (SPSGAGKS) contacts ATP.

This sequence belongs to the guanylate kinase family.

It is found in the cytoplasm. The enzyme catalyses GMP + ATP = GDP + ADP. Essential for recycling GMP and indirectly, cGMP. This chain is Guanylate kinase, found in Rickettsia bellii (strain RML369-C).